We begin with the raw amino-acid sequence, 120 residues long: UPF0231 protein YacL (120 aa).

It belongs to the UPF0231 family.

This is UPF0231 protein YacL from Escherichia coli (strain SMS-3-5 / SECEC).